Consider the following 449-residue polypeptide: Cytochrome P450 monooxygenase iliC (449 aa).

The helical transmembrane segment at 28 to 44 (TFAITFMGVKQICTIEG) threads the bilayer. C397 contacts heme.

This sequence belongs to the cytochrome P450 family. Heme is required as a cofactor.

It is found in the membrane. It carries out the reaction (3E,5S)-3-[(2E,4E,8S,10E,12Z)-1-hydroxy-4,8-dimethyltetradeca-2,4,10,12-tetraen-1-ylidene]-5-[(4-hydroxyphenyl)methyl]pyrrolidine-2,4-dione + reduced [NADPH--hemoprotein reductase] + O2 = 3-[(2E,4E,8S,10E,12Z)-4,8-dimethyltetradeca-2,4,10,12-tetraenoyl]-4-hydroxy-5-(4-hydroxyphenyl)-1,2-dihydropyridin-2-one + oxidized [NADPH--hemoprotein reductase] + 2 H2O. Its pathway is mycotoxin biosynthesis. Functionally, cytochrome P450 monooxygenase; part of the gene cluster that mediates the biosynthesis of ilicicolin H, a 4-hydroxy-2-pyridonealkaloid that has potent and broad antifungal activities by inhibiting the mitochondrial respiration chain. IliC catalyzes the ring expansion of the tetramate intermediate to the acyclic 2-pyridone intermediate that contains the trans bis-diene chain. The biosynthesis of ilicicolin H starts with formation of the tetramic acid by the hybrid PKS-NRPS synthetase iliA with the partnering trans-enoyl reductase iliB since iliA lacks a designated enoylreductase (ER) domain. The cytochrome P450 monooxygenase iliC then catalyzes the ring expansion of the tetramate to the acyclic 2-pyridone. The pericyclase iliD further converts the acyclic 2-pyridone into 8-epi-ilicicolin H. 8-epi-ilicicolin H might then spontaneously convert to ilicicolin H since ilicicolin H is produced in the absence of the epimerase iliE, in contrast to what was observed for the Talaromyces variabilis ilicolin H biosynthetic pathway. In Hypocrea jecorina (strain QM6a) (Trichoderma reesei), this protein is Cytochrome P450 monooxygenase iliC.